The primary structure comprises 226 residues: Enolase-phosphatase E1 (226 aa).

It belongs to the HAD-like hydrolase superfamily. MasA/MtnC family. In terms of assembly, monomer. Mg(2+) serves as cofactor.

It catalyses the reaction 5-methylsulfanyl-2,3-dioxopentyl phosphate + H2O = 1,2-dihydroxy-5-(methylsulfanyl)pent-1-en-3-one + phosphate. Its pathway is amino-acid biosynthesis; L-methionine biosynthesis via salvage pathway; L-methionine from S-methyl-5-thio-alpha-D-ribose 1-phosphate: step 3/6. It functions in the pathway amino-acid biosynthesis; L-methionine biosynthesis via salvage pathway; L-methionine from S-methyl-5-thio-alpha-D-ribose 1-phosphate: step 4/6. Functionally, bifunctional enzyme that catalyzes the enolization of 2,3-diketo-5-methylthiopentyl-1-phosphate (DK-MTP-1-P) into the intermediate 2-hydroxy-3-keto-5-methylthiopentenyl-1-phosphate (HK-MTPenyl-1-P), which is then dephosphorylated to form the acireductone 1,2-dihydroxy-3-keto-5-methylthiopentene (DHK-MTPene). The polypeptide is Enolase-phosphatase E1 (Shewanella sp. (strain MR-4)).